Consider the following 191-residue polypeptide: ATP-dependent dethiobiotin synthetase BioD 2 (191 aa).

Residue 13–18 (DVGKTI) participates in ATP binding. Residue Thr-17 participates in Mg(2+) binding. Lys-38 is a catalytic residue. Thr-42 lines the substrate pocket. ATP-binding positions include Asp-50 and 115–118 (EGAG). Mg(2+) contacts are provided by Asp-50 and Glu-115.

This sequence belongs to the dethiobiotin synthetase family. Homodimer. Mg(2+) is required as a cofactor.

Its subcellular location is the cytoplasm. It catalyses the reaction (7R,8S)-7,8-diammoniononanoate + CO2 + ATP = (4R,5S)-dethiobiotin + ADP + phosphate + 3 H(+). Its pathway is cofactor biosynthesis; biotin biosynthesis; biotin from 7,8-diaminononanoate: step 1/2. Catalyzes a mechanistically unusual reaction, the ATP-dependent insertion of CO2 between the N7 and N8 nitrogen atoms of 7,8-diaminopelargonic acid (DAPA, also called 7,8-diammoniononanoate) to form a ureido ring. In Haemophilus influenzae (strain ATCC 51907 / DSM 11121 / KW20 / Rd), this protein is ATP-dependent dethiobiotin synthetase BioD 2.